The sequence spans 171 residues: MTPFRAGLLALVLTLILDQATKLGLYFGTDLVLTQPWRLAPFADFVVVWNRGVSYGLFQQEGGIGRWLLVALSLAAAIGLGLWMRRATSRLLGIALGLIVGGALGNAIDRAAYGAVFDFVHLHAGGWSWYVFNVADAAIVAGVIGLILDSLSPDGRKDRASPARGDPAPRL.

3 helical membrane-spanning segments follow: residues 7-27 (GLLA…GLYF), 64-84 (IGRW…GLWM), and 88-108 (TSRL…GNAI). Catalysis depends on residues Asp118 and Asp136. Residues 128 to 148 (SWYVFNVADAAIVAGVIGLIL) traverse the membrane as a helical segment.

The protein belongs to the peptidase A8 family.

The protein resides in the cell inner membrane. It catalyses the reaction Release of signal peptides from bacterial membrane prolipoproteins. Hydrolyzes -Xaa-Yaa-Zaa-|-(S,diacylglyceryl)Cys-, in which Xaa is hydrophobic (preferably Leu), and Yaa (Ala or Ser) and Zaa (Gly or Ala) have small, neutral side chains.. The protein operates within protein modification; lipoprotein biosynthesis (signal peptide cleavage). In terms of biological role, this protein specifically catalyzes the removal of signal peptides from prolipoproteins. The sequence is that of Lipoprotein signal peptidase from Methylobacterium radiotolerans (strain ATCC 27329 / DSM 1819 / JCM 2831 / NBRC 15690 / NCIMB 10815 / 0-1).